A 664-amino-acid chain; its full sequence is Macoilin (664 aa).

Helical transmembrane passes span 28 to 48 (TFLY…DFVV), 75 to 95 (AFSV…LLFI), 120 to 140 (VCLP…AIRF), and 154 to 174 (FAAH…KSYV). Residues 253 to 265 (REKGKEKDKDAKK) show a composition bias toward basic and acidic residues. The interval 253–274 (REKGKEKDKDAKKHNLGINNNN) is disordered. S305 is subject to Phosphoserine. Polar residues predominate over residues 320–348 (KNYKNASGVVNSSPRSHSATNGSIPSSSS). The segment at 320–375 (KNYKNASGVVNSSPRSHSATNGSIPSSSSKNEKKQKCTSKSPSTHKDLMENCIPNN) is disordered. N324 is a glycosylation site (N-linked (GlcNAc...) asparagine). The residue at position 332 (S332) is a Phosphoserine. N-linked (GlcNAc...) asparagine glycans are attached at residues N340 and N452. The interval 630-664 (TSPLSPVSPHYSSKFVETSPSGLDPNASVYQPLKK) is disordered. Phosphoserine occurs at positions 631 and 634. N655 is a glycosylation site (N-linked (GlcNAc...) asparagine).

This sequence belongs to the macoilin family.

The protein resides in the rough endoplasmic reticulum membrane. It localises to the nucleus membrane. Its function is as follows. Plays a role in the regulation of neuronal activity. The chain is Macoilin (MACO1) from Pan troglodytes (Chimpanzee).